Consider the following 128-residue polypeptide: Small ribosomal subunit protein uS11 (128 aa).

Belongs to the universal ribosomal protein uS11 family. In terms of assembly, part of the 30S ribosomal subunit. Interacts with proteins S7 and S18. Binds to IF-3.

Located on the platform of the 30S subunit, it bridges several disparate RNA helices of the 16S rRNA. Forms part of the Shine-Dalgarno cleft in the 70S ribosome. In Synechococcus sp. (strain JA-2-3B'a(2-13)) (Cyanobacteria bacterium Yellowstone B-Prime), this protein is Small ribosomal subunit protein uS11.